The primary structure comprises 121 residues: Large ribosomal subunit protein uL14c (121 aa).

The protein belongs to the universal ribosomal protein uL14 family. As to quaternary structure, part of the 50S ribosomal subunit.

It is found in the plastid. The protein localises to the chloroplast. Binds to 23S rRNA. In Tetradesmus obliquus (Green alga), this protein is Large ribosomal subunit protein uL14c.